The primary structure comprises 306 residues: F-box/LRR-repeat protein At3g26922 (306 aa).

In terms of domain architecture, F-box spans 13–73 (EDRISDLPEA…QSEDETYSEI (61 aa)). 6 LRR repeats span residues 67–93 (DETY…HLGF), 98–122 (CRSV…VLHV), 138–170 (CETL…RLEN), 171–196 (VDYK…VVYR), 215–243 (LTIY…KIDG), and 263–288 (IMNV…SLAL).

In Arabidopsis thaliana (Mouse-ear cress), this protein is F-box/LRR-repeat protein At3g26922.